The following is a 122-amino-acid chain: MIQAETRLTVADNSGAKVLGCIKVLGGSKRRYASVGDIIVVSVKEAIPNSKVKKGDVMKAVIVRTKKEIRRPDGTYIRFDDNSAVLINATKEPIGTRIFGPVARELRAKRFMKIISLAPEVL.

The protein belongs to the universal ribosomal protein uL14 family. In terms of assembly, part of the 50S ribosomal subunit. Forms a cluster with proteins L3 and L19. In the 70S ribosome, L14 and L19 interact and together make contacts with the 16S rRNA in bridges B5 and B8.

Its function is as follows. Binds to 23S rRNA. Forms part of two intersubunit bridges in the 70S ribosome. This Desulfatibacillum aliphaticivorans protein is Large ribosomal subunit protein uL14.